We begin with the raw amino-acid sequence, 544 residues long: CTP synthase (544 aa).

Residues 1 to 265 (MTKFIFVTGG…DNIITEQLQL (265 aa)) are amidoligase domain. S13 contacts CTP. S13 lines the UTP pocket. Residues 14 to 19 (SLGKGI) and D71 each bind ATP. Mg(2+) is bound by residues D71 and E139. Residues 146–148 (DIE), 186–191 (KTKPTQ), and K222 each bind CTP. UTP contacts are provided by residues 186–191 (KTKPTQ) and K222. The Glutamine amidotransferase type-1 domain maps to 290 to 544 (KIAMVGKYVD…VKAALNNKKA (255 aa)). Residue G353 participates in L-glutamine binding. The active-site Nucleophile; for glutamine hydrolysis is C380. Residues 381 to 384 (LGMQ), E404, and R471 each bind L-glutamine. Active-site residues include H517 and E519.

The protein belongs to the CTP synthase family. In terms of assembly, homotetramer.

It catalyses the reaction UTP + L-glutamine + ATP + H2O = CTP + L-glutamate + ADP + phosphate + 2 H(+). The catalysed reaction is L-glutamine + H2O = L-glutamate + NH4(+). The enzyme catalyses UTP + NH4(+) + ATP = CTP + ADP + phosphate + 2 H(+). It participates in pyrimidine metabolism; CTP biosynthesis via de novo pathway; CTP from UDP: step 2/2. Its activity is regulated as follows. Allosterically activated by GTP, when glutamine is the substrate; GTP has no effect on the reaction when ammonia is the substrate. The allosteric effector GTP functions by stabilizing the protein conformation that binds the tetrahedral intermediate(s) formed during glutamine hydrolysis. Inhibited by the product CTP, via allosteric rather than competitive inhibition. Its function is as follows. Catalyzes the ATP-dependent amination of UTP to CTP with either L-glutamine or ammonia as the source of nitrogen. Regulates intracellular CTP levels through interactions with the four ribonucleotide triphosphates. This Neisseria meningitidis serogroup A / serotype 4A (strain DSM 15465 / Z2491) protein is CTP synthase.